Consider the following 276-residue polypeptide: Pantothenate synthetase (276 aa).

27-34 (MGALHRGH) serves as a coordination point for ATP. The active-site Proton donor is His-34. Gln-58 contacts (R)-pantoate. Residue Gln-58 coordinates beta-alanine. 147–150 (GKKD) provides a ligand contact to ATP. Residue Gln-153 participates in (R)-pantoate binding. Residues Val-176 and 184–187 (LSSR) contribute to the ATP site.

Belongs to the pantothenate synthetase family. Homodimer.

The protein localises to the cytoplasm. The enzyme catalyses (R)-pantoate + beta-alanine + ATP = (R)-pantothenate + AMP + diphosphate + H(+). Its pathway is cofactor biosynthesis; (R)-pantothenate biosynthesis; (R)-pantothenate from (R)-pantoate and beta-alanine: step 1/1. In terms of biological role, catalyzes the condensation of pantoate with beta-alanine in an ATP-dependent reaction via a pantoyl-adenylate intermediate. This is Pantothenate synthetase from Helicobacter pylori (strain G27).